The chain runs to 345 residues: 3-isopropylmalate dehydrogenase (345 aa).

Substrate is bound by residues R94, R104, R132, and D216. Residues D216, D240, and D244 each coordinate Mg(2+). 274 to 286 contacts NAD(+); it reads GSAPDIAGQGIAN.

The protein belongs to the isocitrate and isopropylmalate dehydrogenases family. LeuB type 1 subfamily. Homodimer. Requires Mg(2+) as cofactor. It depends on Mn(2+) as a cofactor.

It is found in the cytoplasm. The catalysed reaction is (2R,3S)-3-isopropylmalate + NAD(+) = 4-methyl-2-oxopentanoate + CO2 + NADH. It participates in amino-acid biosynthesis; L-leucine biosynthesis; L-leucine from 3-methyl-2-oxobutanoate: step 3/4. Catalyzes the oxidation of 3-carboxy-2-hydroxy-4-methylpentanoate (3-isopropylmalate) to 3-carboxy-4-methyl-2-oxopentanoate. The product decarboxylates to 4-methyl-2 oxopentanoate. This is 3-isopropylmalate dehydrogenase from Streptococcus pneumoniae (strain ATCC BAA-255 / R6).